A 167-amino-acid polypeptide reads, in one-letter code: Translationally-controlled tumor protein homolog (167 aa).

Positions 1 to 167 constitute a TCTP domain; it reads MIIYKDIFSN…WKHGIVEEKI (167 aa). S9 and S15 each carry phosphoserine.

This sequence belongs to the TCTP family. Interacts with the 40S and 60S ribosomal subunits. Interacts with microtubules.

It is found in the cytoplasm. Its subcellular location is the cytoskeleton. It localises to the mitochondrion. Functionally, involved in protein synthesis. Involved in microtubule stabilization. This chain is Translationally-controlled tumor protein homolog (TMA19), found in Saccharomyces cerevisiae (strain ATCC 204508 / S288c) (Baker's yeast).